Here is a 1580-residue protein sequence, read N- to C-terminus: Endoribonuclease Dicer homolog 3 (1580 aa).

Residues methionine 1–glutamate 12 are compositionally biased toward basic and acidic residues. The interval methionine 1 to lysine 22 is disordered. The Helicase ATP-binding domain maps to valine 51–serine 223. Leucine 64 to serine 71 serves as a coordination point for ATP. Positions aspartate 170–histidine 173 match the DECH box motif. The region spanning lysine 394–histidine 562 is the Helicase C-terminal domain. The segment covering glutamate 581 to glutamate 597 has biased composition (polar residues). Disordered stretches follow at residues glutamate 581 to proline 601 and glutamine 613 to lysine 638. Low complexity predominate over residues serine 622–glycine 633. One can recognise a PAZ domain in the interval asparagine 836 to aspartate 960. 2 RNase III domains span residues alanine 985 to glycine 1157 and leucine 1198 to arginine 1340. Mg(2+) is bound by residues glutamate 1234, aspartate 1326, and glutamate 1329.

The protein belongs to the helicase family. Dicer subfamily. Interacts with DRB2 and DRB5. Mg(2+) serves as cofactor. Requires Mn(2+) as cofactor.

It localises to the nucleus. Its subcellular location is the nucleolus. In terms of biological role, ribonuclease (RNase) III involved in RNA-mediated post-transcriptional gene silencing (PTGS). Involved in the processing of repeat-associated small interfering RNAs (ra-siRNAs, derived from heterochromatin and DNA repeats such as transposons) by cleaving small dsRNAs into 24 nucleotide ra-siRNAs. Plays a role in antiviral RNA silencing. Involved in the production of viral siRNAs derived from the cabbage leaf curl virus (CaLCuV) and tobacco rattle virus (TRV). Targeted by the viral silencing suppressor (VSR) protein 2b of the cucumber mosaic virus (CMV) that inactivates DCL3 function in RNA silencing. Acts redundantly with DICER-LIKE 1 (DCL1) to promote flowering via repression of FLOWERING LOCUS C (FLC). Does not seem to be involved in microRNAs (miRNAs) processing. The sequence is that of Endoribonuclease Dicer homolog 3 (DCL3) from Arabidopsis thaliana (Mouse-ear cress).